Reading from the N-terminus, the 502-residue chain is Premnaspirodiene oxygenase (502 aa).

Residues 2-22 (QFFSLVSIFLFLSFLFLLRKW) form a helical membrane-spanning segment. Position 440 (Cys440) interacts with heme.

It belongs to the cytochrome P450 family. The cofactor is heme.

It localises to the membrane. It carries out the reaction (-)-vetispiradiene + 2 reduced [NADPH--hemoprotein reductase] + 2 O2 = solavetivone + 2 oxidized [NADPH--hemoprotein reductase] + 3 H2O + 2 H(+). Its function is as follows. Involved in the biosynthesis of solavetivone, a potent antifungal phytoalexin. Catalyzes the successive and independent hydroxylations of premnaspirodiene and solavetivol. The first hydroxylation step is 3-fold more efficient than the second hydroxylation reaction. The protein is Premnaspirodiene oxygenase (CYP71D55) of Hyoscyamus muticus (Egyptian henbane).